The chain runs to 124 residues: Small ribosomal subunit protein uS12 (124 aa).

D90 bears the 3-methylthioaspartic acid mark.

It belongs to the universal ribosomal protein uS12 family. As to quaternary structure, part of the 30S ribosomal subunit. Contacts proteins S8 and S17. May interact with IF1 in the 30S initiation complex.

With S4 and S5 plays an important role in translational accuracy. Its function is as follows. Interacts with and stabilizes bases of the 16S rRNA that are involved in tRNA selection in the A site and with the mRNA backbone. Located at the interface of the 30S and 50S subunits, it traverses the body of the 30S subunit contacting proteins on the other side and probably holding the rRNA structure together. The combined cluster of proteins S8, S12 and S17 appears to hold together the shoulder and platform of the 30S subunit. The polypeptide is Small ribosomal subunit protein uS12 (Wolbachia pipientis wMel).